Reading from the N-terminus, the 104-residue chain is PE-PGRS family protein PE_PGRS60 (104 aa).

Residues 1 to 60 enclose the PE domain; the sequence is MSYVIAAPEALVAAATDLATLGSTIGAANAAAAGSTTALLTAGADEVSAAIAAYSECTAR. A disordered region spans residues 64–104; it reads HSVRGRRRSMSGSCRPWPQVGAPMRPPRPPASRRCRARSIC. Residues 94–104 show a composition bias toward basic residues; that stretch reads ASRRCRARSIC.

Belongs to the mycobacterial PE family. PGRS subfamily.

Its function is as follows. Binds fibronectin. May contribute to pathogenicity. In Mycobacterium tuberculosis (strain ATCC 25618 / H37Rv), this protein is PE-PGRS family protein PE_PGRS60.